The sequence spans 200 residues: Holliday junction branch migration complex subunit RuvA (200 aa).

The interval 1–63 (MYAYVKGKLT…EDAQLLYGFS (63 aa)) is domain I. The segment at 64–142 (SEEEKDMFLS…ITEEDSDSLL (79 aa)) is domain II. Residues 143–149 (QVDATST) form a flexible linker region. The tract at residues 150-200 (VQDQFVQEAMLALEALGYSKRELAKVEKTLNKNKYDSVDEAVKAGLQLVVS) is domain III.

The protein belongs to the RuvA family. In terms of assembly, homotetramer. Forms an RuvA(8)-RuvB(12)-Holliday junction (HJ) complex. HJ DNA is sandwiched between 2 RuvA tetramers; dsDNA enters through RuvA and exits via RuvB. An RuvB hexamer assembles on each DNA strand where it exits the tetramer. Each RuvB hexamer is contacted by two RuvA subunits (via domain III) on 2 adjacent RuvB subunits; this complex drives branch migration. In the full resolvosome a probable DNA-RuvA(4)-RuvB(12)-RuvC(2) complex forms which resolves the HJ.

It localises to the cytoplasm. In terms of biological role, the RuvA-RuvB-RuvC complex processes Holliday junction (HJ) DNA during genetic recombination and DNA repair, while the RuvA-RuvB complex plays an important role in the rescue of blocked DNA replication forks via replication fork reversal (RFR). RuvA specifically binds to HJ cruciform DNA, conferring on it an open structure. The RuvB hexamer acts as an ATP-dependent pump, pulling dsDNA into and through the RuvAB complex. HJ branch migration allows RuvC to scan DNA until it finds its consensus sequence, where it cleaves and resolves the cruciform DNA. The sequence is that of Holliday junction branch migration complex subunit RuvA from Staphylococcus aureus (strain Mu3 / ATCC 700698).